The following is a 270-amino-acid chain: Replication protein A 32 kDa subunit (270 aa).

Met-1 carries the post-translational modification N-acetylmethionine. Ser-4 and Ser-8 each carry phosphoserine; by PRKDC. Thr-21 is subject to Phosphothreonine; by PRKDC. The tract at residues 21-41 (TQSPGGFGSPAPSQAEKKSRA) is disordered. Position 23 is a phosphoserine; by CDK2 (Ser-23). Ser-29 bears the Phosphoserine; by CDK1 mark. Ser-33 carries the phosphoserine; by PRKDC modification. Residues Lys-37 and Lys-38 each participate in a glycyl lysine isopeptide (Lys-Gly) (interchain with G-Cter in ubiquitin) cross-link. Residues 74-148 (VTIVGIIRHA…KSLVAFKIMP (75 aa)) constitute a DNA-binding region (OB). The segment at 187 to 270 (GMSEAGNFGG…DDHFKSTDAE (84 aa)) is interaction with RAD52, TIPIN, UNG and XPA.

Belongs to the replication factor A protein 2 family. In terms of assembly, component of the replication protein A complex (RPA/RP-A), a heterotrimeric complex composed of RPA1, RPA2 and RPA3. Interacts with PRPF19; the PRP19-CDC5L complex is recruited to the sites of DNA repair where it ubiquitinates the replication protein A complex (RPA). Interacts with SERTAD3. Interacts with TIPIN. Interacts with TIMELESS. Interacts with PPP4R2; the interaction is direct, DNA damage-dependent and mediates the recruitment of the PP4 catalytic subunit PPP4C. Interacts (hyperphosphorylated) with RAD51. Interacts with SMARCAL1; the interaction is direct and mediates the recruitment to the RPA complex of SMARCAL1. Interacts with RAD52 and XPA; those interactions are direct and associate RAD52 and XPA to the RPA complex. Interacts with FBH1. Interacts with ETAA1; the interaction is direct and promotes ETAA1 recruitment at stalled replication forks. Interacts with RFWD3. Interacts with DDI2. Interacts (in unphosphorylated form via N-terminus) with EIF4EBP3; the interaction enhances EIF4EBP3-mediated inhibition of EIF4E-mediated mRNA nuclear export. Interacts with BRIP1/FANCJ via the RPA1 subunit; following DNA damage they colocalize in foci in the nucleus. Interacts with nuclear UNG (isoform 2); this interaction mediates UNG recruitment to RPA-coated single-stranded DNA at stalled replication forks. Differentially phosphorylated throughout the cell cycle, becoming phosphorylated at the G1-S transition and dephosphorylated in late mitosis. Mainly phosphorylated at Ser-23 and Ser-29, by cyclin A-CDK2 and cyclin B-CDK1, respectively during DNA replication and mitosis. Dephosphorylation may require the serine/threonine-protein phosphatase 4. Phosphorylation at Ser-23 and Ser-29 is a prerequisite for further phosphorylation. Becomes hyperphosphorylated on additional residues including Ser-4, Ser-8, Thr-21 and Ser-33 in response to DNA damage. Hyperphosphorylation is mediated by ATM, ATR and PRKDC. Primarily recruited to DNA repair nuclear foci as a hypophosphorylated form it undergoes subsequent hyperphosphorylation, catalyzed by ATR. Hyperphosphorylation is required for RAD51 recruitment to chromatin and efficient DNA repair. Phosphorylation at Thr-21 depends upon RFWD3 presence. Post-translationally, DNA damage-induced 'Lys-63'-linked polyubiquitination by PRPF19 mediates ATRIP recruitment to the RPA complex at sites of DNA damage and activation of ATR. Ubiquitinated by RFWD3 at stalled replication forks in response to DNA damage: ubiquitination by RFWD3 does not lead to degradation by the proteasome and promotes removal of the RPA complex from stalled replication forks, promoting homologous recombination.

It is found in the nucleus. The protein localises to the PML body. Its function is as follows. As part of the heterotrimeric replication protein A complex (RPA/RP-A), binds and stabilizes single-stranded DNA intermediates that form during DNA replication or upon DNA stress. It prevents their reannealing and in parallel, recruits and activates different proteins and complexes involved in DNA metabolism. Thereby, it plays an essential role both in DNA replication and the cellular response to DNA damage. In the cellular response to DNA damage, the RPA complex controls DNA repair and DNA damage checkpoint activation. Through recruitment of ATRIP activates the ATR kinase a master regulator of the DNA damage response. It is required for the recruitment of the DNA double-strand break repair factors RAD51 and RAD52 to chromatin in response to DNA damage. Also recruits to sites of DNA damage proteins like XPA and XPG that are involved in nucleotide excision repair and is required for this mechanism of DNA repair. Also plays a role in base excision repair (BER) probably through interaction with UNG. Also recruits SMARCAL1/HARP, which is involved in replication fork restart, to sites of DNA damage. May also play a role in telomere maintenance. RPA stimulates 5'-3' helicase activity of BRIP1/FANCJ. The protein is Replication protein A 32 kDa subunit (RPA2) of Homo sapiens (Human).